The chain runs to 816 residues: Probable E3 ubiquitin-protein ligase hulA (816 aa).

One can recognise a C2 domain in the interval 1–112; that stretch reads MGSNLPAQPN…QMGGDEMLTR (112 aa). Disordered regions lie at residues 134-238 and 254-354; these read NLST…GWER and RTTT…YFVD. The span at 160-178 shows a compositional bias: low complexity; that stretch reads VPQVAPSSSHPAASGAAPV. Residues 181-192 show a composition bias toward polar residues; sequence SASNPSLNPQRV. A compositionally biased stretch (low complexity) spans 193–213; it reads PSTTRPSSTAAPASAAGAAAS. 2 stretches are compositionally biased toward polar residues: residues 214–227 and 254–267; these read NTHG…SFED and RTTT…NYNE. The region spanning 230–263 is the WW 1 domain; the sequence is GRLPAGWERREDNLGRTYYVDHNTRTTTWTRPSS. Residues 268 to 295 show a composition bias toward basic and acidic residues; the sequence is HAQRSQREANMQLERRAHQSRMLPEDRT. The segment covering 296–310 has biased composition (polar residues); sequence GANSPNLPESSQQAH. The segment covering 325-334 has biased composition (low complexity); it reads ATGATTAGTG. 2 consecutive WW domains span residues 334 to 367 and 394 to 427; these read GELP…DPRR and GPLP…DPRL. The region spanning 483 to 816 is the HECT domain; the sequence is SASDLKKRLM…VEETLGFGQE (334 aa). C784 serves as the catalytic Glycyl thioester intermediate.

Belongs to the RSP5/NEDD4 family. As to quaternary structure, interacts with creD.

It is found in the cytoplasm. It catalyses the reaction S-ubiquitinyl-[E2 ubiquitin-conjugating enzyme]-L-cysteine + [acceptor protein]-L-lysine = [E2 ubiquitin-conjugating enzyme]-L-cysteine + N(6)-ubiquitinyl-[acceptor protein]-L-lysine.. Its pathway is protein modification; protein ubiquitination. E3 ubiquitin-protein ligase which accepts ubiquitin from an E2 ubiquitin-conjugating enzyme in the form of a thioester and then directly transfers the ubiquitin to targeted substrates. Probably involved in the regulatory network controlling carbon source utilization. The sequence is that of Probable E3 ubiquitin-protein ligase hulA (hulA) from Neosartorya fischeri (strain ATCC 1020 / DSM 3700 / CBS 544.65 / FGSC A1164 / JCM 1740 / NRRL 181 / WB 181) (Aspergillus fischerianus).